Reading from the N-terminus, the 454-residue chain is Bifunctional protein GlmU (454 aa).

The segment at 1–228 (MSPLHVVILA…PFEVQGVNNR (228 aa)) is pyrophosphorylase. UDP-N-acetyl-alpha-D-glucosamine is bound by residues 9 to 12 (LAAG), K23, Q74, 79 to 80 (GT), 101 to 103 (YGD), G138, E153, N168, and N226. D103 lines the Mg(2+) pocket. Residue N226 coordinates Mg(2+). A linker region spans residues 229 to 249 (LQLAELERWYQRQQAERLMTE). Residues 250-454 (GASLADPARI…IAGWERPKKA (205 aa)) form an N-acetyltransferase region. UDP-N-acetyl-alpha-D-glucosamine is bound by residues R332 and K350. H362 functions as the Proton acceptor in the catalytic mechanism. 2 residues coordinate UDP-N-acetyl-alpha-D-glucosamine: Y365 and N376. Residues A379, 385–386 (NY), S404, A422, and R439 contribute to the acetyl-CoA site.

In the N-terminal section; belongs to the N-acetylglucosamine-1-phosphate uridyltransferase family. The protein in the C-terminal section; belongs to the transferase hexapeptide repeat family. Homotrimer. The cofactor is Mg(2+).

Its subcellular location is the cytoplasm. The catalysed reaction is alpha-D-glucosamine 1-phosphate + acetyl-CoA = N-acetyl-alpha-D-glucosamine 1-phosphate + CoA + H(+). The enzyme catalyses N-acetyl-alpha-D-glucosamine 1-phosphate + UTP + H(+) = UDP-N-acetyl-alpha-D-glucosamine + diphosphate. The protein operates within nucleotide-sugar biosynthesis; UDP-N-acetyl-alpha-D-glucosamine biosynthesis; N-acetyl-alpha-D-glucosamine 1-phosphate from alpha-D-glucosamine 6-phosphate (route II): step 2/2. It functions in the pathway nucleotide-sugar biosynthesis; UDP-N-acetyl-alpha-D-glucosamine biosynthesis; UDP-N-acetyl-alpha-D-glucosamine from N-acetyl-alpha-D-glucosamine 1-phosphate: step 1/1. It participates in bacterial outer membrane biogenesis; LPS lipid A biosynthesis. Functionally, catalyzes the last two sequential reactions in the de novo biosynthetic pathway for UDP-N-acetylglucosamine (UDP-GlcNAc). The C-terminal domain catalyzes the transfer of acetyl group from acetyl coenzyme A to glucosamine-1-phosphate (GlcN-1-P) to produce N-acetylglucosamine-1-phosphate (GlcNAc-1-P), which is converted into UDP-GlcNAc by the transfer of uridine 5-monophosphate (from uridine 5-triphosphate), a reaction catalyzed by the N-terminal domain. In Marinobacter nauticus (strain ATCC 700491 / DSM 11845 / VT8) (Marinobacter aquaeolei), this protein is Bifunctional protein GlmU.